A 289-amino-acid polypeptide reads, in one-letter code: Nucleotide-binding protein CHY_0272 (289 aa).

8-15 is a binding site for ATP; it reads GLSGAGKT. Residue 59-62 coordinates GTP; the sequence is DVRG.

Belongs to the RapZ-like family.

Functionally, displays ATPase and GTPase activities. The protein is Nucleotide-binding protein CHY_0272 of Carboxydothermus hydrogenoformans (strain ATCC BAA-161 / DSM 6008 / Z-2901).